A 445-amino-acid chain; its full sequence is DNA repair protein RadA (445 aa).

A C4-type zinc finger spans residues 10–27 (CSNCANISNKWSGQCFDC). Residue 90–97 (GEPGIGKS) participates in ATP binding. Residues 249–253 (KNRFG) carry the RadA KNRFG motif motif. Residues 348–445 (EIYLSIAGGL…HLQELKEIIK (98 aa)) are lon-protease-like.

It belongs to the RecA family. RadA subfamily.

DNA-dependent ATPase involved in processing of recombination intermediates, plays a role in repairing DNA breaks. Stimulates the branch migration of RecA-mediated strand transfer reactions, allowing the 3' invading strand to extend heteroduplex DNA faster. Binds ssDNA in the presence of ADP but not other nucleotides, has ATPase activity that is stimulated by ssDNA and various branched DNA structures, but inhibited by SSB. Does not have RecA's homology-searching function. This Rickettsia prowazekii (strain Madrid E) protein is DNA repair protein RadA.